Here is a 547-residue protein sequence, read N- to C-terminus: ATP synthase subunit alpha (547 aa).

173-180 lines the ATP pocket; sequence GDRQTGKT.

It belongs to the ATPase alpha/beta chains family. In terms of assembly, F-type ATPases have 2 components, CF(1) - the catalytic core - and CF(0) - the membrane proton channel. CF(1) has five subunits: alpha(3), beta(3), gamma(1), delta(1), epsilon(1). CF(0) has three main subunits: a(1), b(2) and c(9-12). The alpha and beta chains form an alternating ring which encloses part of the gamma chain. CF(1) is attached to CF(0) by a central stalk formed by the gamma and epsilon chains, while a peripheral stalk is formed by the delta and b chains.

The protein resides in the cell membrane. The catalysed reaction is ATP + H2O + 4 H(+)(in) = ADP + phosphate + 5 H(+)(out). In terms of biological role, produces ATP from ADP in the presence of a proton gradient across the membrane. The alpha chain is a regulatory subunit. The chain is ATP synthase subunit alpha from Thermobifida fusca (strain YX).